The following is a 556-amino-acid chain: MRSDAVKKGVERAPHRSLLYALGLTDEELKRPIIGVANSKNEIIPGHIHLDKIAEAVKAGIRMAGGTPVEFSTIGVCDGIAMGHGGMKYSLGSREVIADSIEIMAMAHGFDGIVLIPNCDKIVPGMLMAAARLDIPAIVVSGGPMLAGICDGTTCDLSTVFEAVGALKAGKITEEEFYSIERNACPTCGSCSGMFTANTMNCLTEALGLGLPGNGTIPAVYSERIRLAKEAGMKIVELVERNITPSQILTKEAFVNAFSLDMALGGSTNTVLHLKAIAHEAGVDIPLEEINDISDRVPNLCKLSPAGKYHIEDLHFAGGVSAVLKELSKAGLLHLDALTVTGRTLGENIKDAKVRNRDVIRTIEDPYSKTGGIAILFGNIAREGAVVKASAVSPEMLRHEGPARVFDSEEEAIEAIYGGKIQKGDVVVIRYEGPKGGPGMREMLSPTSALAGMGLDKDVALITDGRFSGATRGASIGHVSPEAMEGGEIAIIEDGDIIEIDIPARKINVKLSDEEIKKRMANWKRPEPKIKKGYMARYTREVTSGSKGAVFREGGV.

Asp78 serves as a coordination point for Mg(2+). Cys119 contacts [2Fe-2S] cluster. Mg(2+) contacts are provided by Asp120 and Lys121. Lys121 carries the post-translational modification N6-carboxylysine. [2Fe-2S] cluster is bound at residue Cys191. Glu442 contacts Mg(2+). The active-site Proton acceptor is the Ser468.

This sequence belongs to the IlvD/Edd family. Homodimer. [2Fe-2S] cluster is required as a cofactor. Requires Mg(2+) as cofactor.

The enzyme catalyses (2R)-2,3-dihydroxy-3-methylbutanoate = 3-methyl-2-oxobutanoate + H2O. It catalyses the reaction (2R,3R)-2,3-dihydroxy-3-methylpentanoate = (S)-3-methyl-2-oxopentanoate + H2O. It functions in the pathway amino-acid biosynthesis; L-isoleucine biosynthesis; L-isoleucine from 2-oxobutanoate: step 3/4. Its pathway is amino-acid biosynthesis; L-valine biosynthesis; L-valine from pyruvate: step 3/4. In terms of biological role, functions in the biosynthesis of branched-chain amino acids. Catalyzes the dehydration of (2R,3R)-2,3-dihydroxy-3-methylpentanoate (2,3-dihydroxy-3-methylvalerate) into 2-oxo-3-methylpentanoate (2-oxo-3-methylvalerate) and of (2R)-2,3-dihydroxy-3-methylbutanoate (2,3-dihydroxyisovalerate) into 2-oxo-3-methylbutanoate (2-oxoisovalerate), the penultimate precursor to L-isoleucine and L-valine, respectively. The sequence is that of Dihydroxy-acid dehydratase from Caldanaerobacter subterraneus subsp. tengcongensis (strain DSM 15242 / JCM 11007 / NBRC 100824 / MB4) (Thermoanaerobacter tengcongensis).